A 513-amino-acid chain; its full sequence is Leucine-rich repeat-containing protein 24 (513 aa).

An N-terminal signal peptide occupies residues 1–20 (MALRAPALLPLLLLLLPLRA). Positions 21 to 50 (AGCPAACRCYSATVECGALRLRVVPLGIPP) constitute an LRRNT domain. 6 LRR repeats span residues 51–72 (GTQT…ALAP), 75–96 (ALRR…AFRA), 99–120 (RLLE…AFVG), 123–144 (QLRV…TFLH), 147–168 (RLQE…ALAG), and 171–192 (SLAL…ALQP). The LRRCT domain occupies 204-259 (NPWRCDCALHWLGAWIKEGGQRLLTSRDRKIMCAEPPRLALQSLLDVSHSSLICIP). An Ig-like C2-type domain is found at 260–361 (PSVHVQPLEL…GAARVPFRLL (102 aa)). Cysteine 281 and cysteine 345 are oxidised to a cystine. 2 N-linked (GlcNAc...) asparagine glycosylation sites follow: asparagine 334 and asparagine 363. Residues 365 to 391 (SRQQPQQPAQPPPPAARPAGSEPRPEA) are disordered. A helical transmembrane segment spans residues 406-426 (AIAAAIALLALTALLLVAMIC).

Its subcellular location is the membrane. The sequence is that of Leucine-rich repeat-containing protein 24 (LRRC24) from Homo sapiens (Human).